The sequence spans 177 residues: Transcription antitermination protein NusB (177 aa).

Positions 1–35 (MTDSANPTPSARPPRQPRTGTTGTGARKAGSKSGR) are disordered. A compositionally biased stretch (low complexity) spans 17 to 28 (PRTGTTGTGARK).

It belongs to the NusB family.

Involved in transcription antitermination. Required for transcription of ribosomal RNA (rRNA) genes. Binds specifically to the boxA antiterminator sequence of the ribosomal RNA (rrn) operons. The polypeptide is Transcription antitermination protein NusB (Acidovorax ebreus (strain TPSY) (Diaphorobacter sp. (strain TPSY))).